The primary structure comprises 80 residues: Adipogenin (80 aa).

A helical transmembrane segment spans residues 16–36 (FLVFWLCLPVALLLFLTIVWL). Ser-63 bears the Phosphoserine mark.

It belongs to the adipogenin family. As to expression, selectively expressed in adipose tissue where it is particularly enriched in brown adipose tissue. In adipose tissue, expressed exclusively in adipocytes and not in the stromal-vascular cell population. Expressed at much lower levels in heart, stomach and muscle and barely detected in kidney and lung.

It is found in the membrane. The protein localises to the nucleus. Plays a role in stimulating adipocyte differentiation and development. This is Adipogenin (Adig) from Mus musculus (Mouse).